A 153-amino-acid polypeptide reads, in one-letter code: Arginine repressor (153 aa).

The protein belongs to the ArgR family.

Its subcellular location is the cytoplasm. Its pathway is amino-acid biosynthesis; L-arginine biosynthesis [regulation]. Regulates arginine biosynthesis genes. This is Arginine repressor from Clostridium tetani (strain Massachusetts / E88).